A 365-amino-acid chain; its full sequence is DNA replication and repair protein RecF (365 aa).

Position 30–37 (30–37 (GENGQGKT)) interacts with ATP.

It belongs to the RecF family.

The protein localises to the cytoplasm. The RecF protein is involved in DNA metabolism; it is required for DNA replication and normal SOS inducibility. RecF binds preferentially to single-stranded, linear DNA. It also seems to bind ATP. In Desulfitobacterium hafniense (strain DSM 10664 / DCB-2), this protein is DNA replication and repair protein RecF.